The sequence spans 512 residues: ETS translocation variant 3 (512 aa).

The ETS DNA-binding region spans 35–116; that stretch reads IQLWHFILEL…KGKRFTYKFN (82 aa). Residues 136-222 form a disordered region; the sequence is VPQSAPPVPT…NAIGGGGIGH (87 aa). Phosphoserine is present on residues S139, S159, and S315. The span at 158–184 shows a compositional bias: polar residues; the sequence is HSPTNDVQPGRFSASSLTASGQESSNG. The tract at residues 336 to 512 is disordered; sequence PEESTQFSIK…QGLATAAADA (177 aa). 3 stretches are compositionally biased toward basic and acidic residues: residues 380–406, 453–468, and 479–491; these read IKVEPASEKDPESLRQSAREKEEHTQE, DRPGKEPSAPEKKEDA, and RWNDDPEARELSK. K381 is covalently cross-linked (Glycyl lysine isopeptide (Lys-Gly) (interchain with G-Cter in SUMO2)). An N6-acetyllysine; alternate modification is found at K388. Residue K388 forms a Glycyl lysine isopeptide (Lys-Gly) (interchain with G-Cter in SUMO2); alternate linkage.

The protein belongs to the ETS family.

It is found in the nucleus. Its function is as follows. Transcriptional repressor that contribute to growth arrest during terminal macrophage differentiation by repressing target genes involved in Ras-dependent proliferation. Represses MMP1 promoter activity. This Homo sapiens (Human) protein is ETS translocation variant 3 (ETV3).